A 172-amino-acid chain; its full sequence is Large ribosomal subunit protein bL17m (172 aa).

Residues 1 to 8 constitute a mitochondrion transit peptide; that stretch reads MRLSFAAA.

This sequence belongs to the bacterial ribosomal protein bL17 family. As to quaternary structure, component of the mitochondrial ribosome large subunit (39S) which comprises a 16S rRNA and about 50 distinct proteins.

The protein localises to the mitochondrion. The polypeptide is Large ribosomal subunit protein bL17m (MRPL17) (Bos taurus (Bovine)).